The chain runs to 227 residues: Chaperone protein FocC (227 aa).

The first 21 residues, 1–21 (MRIWAVLASFLVFFYIPQSYA), serve as a signal peptide directing secretion.

It belongs to the periplasmic pilus chaperone family.

Its subcellular location is the periplasm. Functionally, involved in the biogenesis of the F1C fimbriae. The protein is Chaperone protein FocC (focC) of Escherichia coli O6:H1 (strain CFT073 / ATCC 700928 / UPEC).